The sequence spans 555 residues: Beta-fructofuranosidase, cell wall isozyme (555 aa).

The first 22 residues, 1–22 (MAISSIFLLSLFSLIYVIPIEA), serve as a signal peptide directing secretion. Substrate contacts are provided by residues 58-61 (WIND), Gln-77, Trp-85, and 120-121 (WS). Residue Asp-61 is part of the active site. The active site involves Asp-140. N-linked (GlcNAc...) asparagine glycans are attached at residues Asn-154 and Asn-181. Substrate is bound by residues 186–187 (RD), Glu-241, and Asp-277. The N-linked (GlcNAc...) asparagine glycan is linked to Asn-337. Cysteines 435 and 481 form a disulfide.

This sequence belongs to the glycosyl hydrolase 32 family.

It carries out the reaction Hydrolysis of terminal non-reducing beta-D-fructofuranoside residues in beta-D-fructofuranosides.. In Pisum sativum (Garden pea), this protein is Beta-fructofuranosidase, cell wall isozyme (BFRUCT1).